The chain runs to 247 residues: Homeobox-leucine zipper protein HOX17 (247 aa).

Residues 58–81 (ERAGLRGGGGSDEEDGGCGIDGSR) are disordered. A DNA-binding region (homeobox) is located at residues 79–138 (GSRKKLRLSKDQSAVLEDSFREHPTLNPRQKATLAQQLGLRPRQVEVWFQNRRARTKLKQ). The interval 137-182 (KQTEVDCEFLKRCCETLTEENRRLQKEVQELRALKLVSPHLYMNMS) is leucine-zipper.

The protein belongs to the HD-ZIP homeobox family. Class II subfamily. In terms of tissue distribution, expressed in seedlings, roots, stems, leaf sheaths and blades and panicles.

The protein resides in the nucleus. Functionally, probable transcription factor. This chain is Homeobox-leucine zipper protein HOX17 (HOX17), found in Oryza sativa subsp. indica (Rice).